The chain runs to 725 residues: Polyribonucleotide nucleotidyltransferase (725 aa).

Residues D487 and D493 each contribute to the Mg(2+) site. In terms of domain architecture, KH spans 554-613 (PRIETMQIPTDKIREVIGTGGKVIREIVEKTGAKIDIQDTGVVKIASSDGKAIKAAYNWI). The S1 motif domain occupies 623–691 (GMIYDGTVVK…ERGKIRLSMK (69 aa)). The segment at 699 to 725 (EDLTEKLKAEREADRNRERQARQSAGE) is disordered. Over residues 701-719 (LTEKLKAEREADRNRERQA) the composition is skewed to basic and acidic residues.

The protein belongs to the polyribonucleotide nucleotidyltransferase family. The cofactor is Mg(2+).

The protein resides in the cytoplasm. The enzyme catalyses RNA(n+1) + phosphate = RNA(n) + a ribonucleoside 5'-diphosphate. Functionally, involved in mRNA degradation. Catalyzes the phosphorolysis of single-stranded polyribonucleotides processively in the 3'- to 5'-direction. The chain is Polyribonucleotide nucleotidyltransferase from Methylobacterium sp. (strain 4-46).